We begin with the raw amino-acid sequence, 634 residues long: Growth hormone receptor (634 aa).

A signal peptide spans 1-18 (MDLWQLLLTLAVAGSSDA). Topologically, residues 19–260 (FSGSEATPAF…NPSACEEDFQ (242 aa)) are extracellular. An N-linked (GlcNAc...) asparagine glycan is attached at Asn-46. Residues Cys-56 and Cys-66 are joined by a disulfide bond. An N-linked (GlcNAc...) asparagine glycan is attached at Asn-73. Cys-97 and Cys-108 are disulfide-bonded. N-linked (GlcNAc...) asparagine glycosylation occurs at Asn-111. Cys-122 and Cys-136 form a disulfide bridge. In terms of domain architecture, Fibronectin type-III spans 147–250 (PPVGLNWTLL…EVLLITFPQM (104 aa)). N-linked (GlcNAc...) asparagine glycans are attached at residues Asn-152, Asn-157, and Asn-196. The short motif at 236–240 (YGKFS) is the WSXWS motif element. Residues 261–284 (FPWFLIIIFGILGLTVTLFLLIFS) traverse the membrane as a helical segment. Topologically, residues 285-634 (KQQRIKMLIL…STDQLNKIMP (350 aa)) are cytoplasmic. The tract at residues 290–375 (KMLILPPVPV…HEKSLSIFGA (86 aa)) is required for JAK2 binding. The Box 1 motif motif lies at 293 to 301 (ILPPVPVPK). The UbE motif motif lies at 336–345 (DSWVEFIELD). Phosphoserine is present on Ser-337. Residues 451 to 471 (KPRPLPIGGTESTHQAVHTQL) are disordered. A compositionally biased stretch (polar residues) spans 460 to 471 (TESTHQAVHTQL). Tyr-483 and Tyr-591 each carry phosphotyrosine.

Belongs to the type I cytokine receptor family. Type 1 subfamily. On growth hormone (GH) binding, forms homodimers and binds JAK2 via a box 1-containing domain. The soluble form (GHBP) is produced by phorbol ester-promoted proteolytic cleavage at the cell surface (shedding) by ADAM17/TACE. Shedding is inhibited by growth hormone (GH) binding to the receptor probably due to a conformational change in GHR rendering the receptor inaccessible to ADAM17. In terms of processing, on GH binding, phosphorylated on tyrosine residues in the cytoplasmic domain by JAK2. Post-translationally, ubiquitinated by the ECS(SOCS2) complex following ligand-binding and phosphorylation by JAK2, leading to its degradation by the proteasome. Regulation by the ECS(SOCS2) complex acts as a negative feedback loop of growth hormone receptor signaling. Ubiquitination is not sufficient for GHR internalization.

It localises to the cell membrane. The protein localises to the secreted. In terms of biological role, receptor for pituitary gland growth hormone (GH1) involved in regulating postnatal body growth. On ligand binding, couples to the JAK2/STAT5 pathway. The soluble form (GHBP) acts as a reservoir of growth hormone in plasma and may be a modulator/inhibitor of GH signaling. This chain is Growth hormone receptor (GHR), found in Ovis aries (Sheep).